A 177-amino-acid polypeptide reads, in one-letter code: Large ribosomal subunit protein uL6 (177 aa).

Belongs to the universal ribosomal protein uL6 family. As to quaternary structure, part of the 50S ribosomal subunit.

This protein binds to the 23S rRNA, and is important in its secondary structure. It is located near the subunit interface in the base of the L7/L12 stalk, and near the tRNA binding site of the peptidyltransferase center. The chain is Large ribosomal subunit protein uL6 from Buchnera aphidicola subsp. Acyrthosiphon kondoi (Acyrthosiphon kondoi symbiotic bacterium).